We begin with the raw amino-acid sequence, 295 residues long: (R)-3-hydroxydecanoyl-ACP:CoA transacylase (295 aa).

The 227-residue stretch at 28-254 folds into the AB hydrolase-1 domain; the sequence is NTIILINGSL…VIRDAGHFLD (227 aa).

It participates in polyester biosynthesis; polyhydroxyalkanoate biosynthesis. Functionally, catalyzes the transfer of the acyl moiety from in vitro synthesized 3-hydroxydecanoyl-CoA to acyl carrier protein. This Pseudomonas putida (strain ATCC 47054 / DSM 6125 / CFBP 8728 / NCIMB 11950 / KT2440) protein is (R)-3-hydroxydecanoyl-ACP:CoA transacylase (phaG).